Consider the following 859-residue polypeptide: Auxin response factor 2 (859 aa).

Positions methionine 1 to alanine 48 are disordered. Over residues glycine 14–serine 23 the composition is skewed to low complexity. Positions phenylalanine 164–methionine 266 form a DNA-binding region, TF-B3. Residues leucine 396–proline 407 are compositionally biased toward pro residues. Disordered regions lie at residues leucine 396–serine 442, isoleucine 687–threonine 736, and arginine 829–serine 859. 2 stretches are compositionally biased toward polar residues: residues isoleucine 416–leucine 426 and leucine 695–serine 704. The region spanning arginine 733–glutamate 817 is the PB1 domain. Over residues serine 847 to serine 859 the composition is skewed to polar residues.

The protein belongs to the ARF family. Homodimers and heterodimers. Interacts with ARF1. In terms of tissue distribution, expressed in the whole plant.

The protein localises to the nucleus. Auxin response factors (ARFs) are transcriptional factors that bind specifically to the DNA sequence 5'-TGTCTC-3' found in the auxin-responsive promoter elements (AuxREs). Could act as transcriptional activator or repressor. Formation of heterodimers with Aux/IAA proteins may alter their ability to modulate early auxin response genes expression. Promotes flowering, stamen development, floral organ abscission and fruit dehiscence. Functions independently of ethylene and cytokinin response pathways. May act as a repressor of cell division and organ growth. This Arabidopsis thaliana (Mouse-ear cress) protein is Auxin response factor 2 (ARF2).